A 434-amino-acid chain; its full sequence is uncharacterized protein (434 aa).

The first 17 residues, 1-17, serve as a signal peptide directing secretion; that stretch reads MTFLLFQLLVLLRYSIG. Helical transmembrane passes span 48-68, 70-90, 112-132, 141-161, 173-193, 206-226, 232-252, 271-291, 305-325, 344-364, 380-400, and 404-424; these read AAIS…FTVL, EWVY…SVTA, YRVA…FTIF, TYGT…NAVV, WITG…RLVT, YGVH…TSFV, YCGL…LSGL, EGVY…HLGY, TSSI…TILF, WVLA…YIPL, ATFL…DTIF, and FSSL…IGTI.

It localises to the membrane. This is an uncharacterized protein from Arabidopsis thaliana (Mouse-ear cress).